The following is a 104-amino-acid chain: uncharacterized protein (104 aa).

Residues 1–24 are disordered; sequence MISTEKSSDAVAMHCPSGDQHNSE.

This is an uncharacterized protein from Saccharomyces cerevisiae (strain ATCC 204508 / S288c) (Baker's yeast).